The chain runs to 172 residues: Protein 3 (172 aa).

The protein is Protein 3 (3) of Northern cereal mosaic virus (NCMV).